A 207-amino-acid polypeptide reads, in one-letter code: Outer-membrane lipoprotein LolB (207 aa).

An N-terminal signal peptide occupies residues 1–21; the sequence is MPTKTVRCLRLLPLASLLLAA. Residue Cys-22 is the site of N-palmitoyl cysteine attachment. Cys-22 is lipidated: S-diacylglycerol cysteine.

The protein belongs to the LolB family. As to quaternary structure, monomer.

Its subcellular location is the cell outer membrane. In terms of biological role, plays a critical role in the incorporation of lipoproteins in the outer membrane after they are released by the LolA protein. The sequence is that of Outer-membrane lipoprotein LolB from Pectobacterium atrosepticum (strain SCRI 1043 / ATCC BAA-672) (Erwinia carotovora subsp. atroseptica).